Reading from the N-terminus, the 408-residue chain is MIERSNSTPSATPVRPPLAVDEEYNQAFRSKSFLDLWSHAHHHLTHTFSSFKLSTSTPCAGRGGAREDDFLHAGGDGGAADDSEQSCSYTVLDDFVLEPSPESLARGARLQQRRRRRPRRHRVETLLIEYFDVTEEACEACSALLAAIGAARRHHLTLRRLLLRLDGGDDDDAKDALARHVRLDNPLSPGSLSEFHDVHARCSPLASRLAAAQRRLRRLARALRIARGTAAAALVGACAAAIVAAVVLAAHALVGIGVAAAAFGATPAGAARWWARRAAEKVSSRHYARAGATLDAAARGAYIVGRDLDTVSRMVRRAHDELEHGRDVARIAMRGHGERPLLQEVAREEEECEEDLRAQLAELEEHVCLCLITINRTRRLVAHEMARGLPPPSPATVTTTSEERLTSS.

The next 2 membrane-spanning stretches (helical) occupy residues 224–244 (RIARGTAAAALVGACAAAIVA) and 252–272 (ALVGIGVAAAAFGATPAGAAR). Residues 385–408 (MARGLPPPSPATVTTTSEERLTSS) form a disordered region.

It belongs to the UPF0496 family.

It localises to the membrane. This chain is Putative UPF0496 protein 2, found in Oryza sativa subsp. indica (Rice).